We begin with the raw amino-acid sequence, 325 residues long: DDB1- and CUL4-associated factor 7 homolog (325 aa).

WD repeat units lie at residues 62-104 (EHPY…RSIK), 115-155 (EFCA…AKTQ), 158-197 (AHDK…HSTI), and 247-287 (FHKS…KPIE).

The protein belongs to the WD repeat DCAF7 family.

This chain is DDB1- and CUL4-associated factor 7 homolog (wdr68), found in Dictyostelium discoideum (Social amoeba).